The chain runs to 481 residues: Argininosuccinate lyase (481 aa).

This sequence belongs to the lyase 1 family. Argininosuccinate lyase subfamily.

The protein localises to the cytoplasm. The enzyme catalyses 2-(N(omega)-L-arginino)succinate = fumarate + L-arginine. It functions in the pathway amino-acid biosynthesis; L-arginine biosynthesis; L-arginine from L-ornithine and carbamoyl phosphate: step 3/3. This Methanococcus vannielii (strain ATCC 35089 / DSM 1224 / JCM 13029 / OCM 148 / SB) protein is Argininosuccinate lyase.